Reading from the N-terminus, the 756-residue chain is Amine oxidase [copper-containing] 2 (756 aa).

Residues 1–4 lie on the Cytoplasmic side of the membrane; it reads MHLK. A helical transmembrane segment spans residues 5–25; it reads IVLAFLALSLITIFALAYVLL. Residues 26–756 are Extracellular-facing; sequence TSPGGSSQPP…DLPPFSYHGF (731 aa). 3 N-linked (GlcNAc...) asparagine glycosylation sites follow: N133, N198, and N226. The active-site Proton acceptor is D380. C398 and C424 are oxidised to a cystine. Catalysis depends on Y465, which acts as the Schiff-base intermediate with substrate; via topaquinone. The residue at position 465 (Y465) is a 2',4',5'-topaquinone. The Cu(2+) site is built by H516 and H518. Ca(2+) is bound by residues D525, L526, D527, E568, E637, F659, and N661. A glycan (N-linked (GlcNAc...) asparagine) is linked at N662. The Ca(2+) site is built by E663, D669, and L670. H680 is a binding site for Cu(2+). An intrachain disulfide couples C730 to C737.

This sequence belongs to the copper/topaquinone oxidase family. Homodimer; disulfide-linked. Probably forms heterodimers with AOC3. Cu(2+) serves as cofactor. Requires Ca(2+) as cofactor. L-topaquinone is required as a cofactor. Topaquinone (TPQ) is generated by copper-dependent autoxidation of a specific tyrosyl residue. Expressed in many tissues including adipocytes with higher expression in retina where it is active. In terms of tissue distribution, not expressed in testis. As to expression, not expressed in thymus.

The protein resides in the cell membrane. It is found in the cytoplasm. It catalyses the reaction 2-phenylethylamine + O2 + H2O = 2-phenylacetaldehyde + H2O2 + NH4(+). The enzyme catalyses tryptamine + O2 + H2O = indole-3-acetaldehyde + H2O2 + NH4(+). It carries out the reaction tyramine + O2 + H2O = (4-hydroxyphenyl)acetaldehyde + H2O2 + NH4(+). Catalyzes the oxidative deamination of primary amines to the corresponding aldehydes with the concomitant production of hydrogen peroxide and ammonia. Has a preference for 2-phenylethylamine, tryptamine and tyramine. Could also act on methylamine and benzylamine but much less efficiently. The polypeptide is Amine oxidase [copper-containing] 2 (Homo sapiens (Human)).